The primary structure comprises 331 residues: Probable cytosolic iron-sulfur protein assembly protein Ciao1 (331 aa).

WD repeat units lie at residues Gly-12 to Lys-51, Gly-57 to Glu-96, Gly-97 to Cys-136, Ala-142 to Asp-181, Ser-188 to Gly-227, Gln-246 to Glu-285, and Ala-297 to Glu-331.

The protein belongs to the WD repeat CIA1 family.

Functionally, essential component of the cytosolic iron-sulfur (Fe/S) protein assembly machinery. Required for the maturation of extramitochondrial Fe/S proteins. This Drosophila grimshawi (Hawaiian fruit fly) protein is Probable cytosolic iron-sulfur protein assembly protein Ciao1.